The primary structure comprises 391 residues: Protein-glutamate methylesterase/protein-glutamine glutaminase of group 2 operon (391 aa).

Residues Arg-20–His-138 enclose the Response regulatory domain. A 4-aspartylphosphate modification is found at Asp-71. The CheB-type methylesterase domain maps to Pro-196 to Val-383. Catalysis depends on residues Ser-207, His-235, and Asp-331.

This sequence belongs to the CheB family. Phosphorylated by CheA. Phosphorylation of the N-terminal regulatory domain activates the methylesterase activity.

The protein localises to the cytoplasm. It catalyses the reaction [protein]-L-glutamate 5-O-methyl ester + H2O = L-glutamyl-[protein] + methanol + H(+). It carries out the reaction L-glutaminyl-[protein] + H2O = L-glutamyl-[protein] + NH4(+). Functionally, involved in chemotaxis. Part of a chemotaxis signal transduction system that modulates chemotaxis in response to various stimuli. Catalyzes the demethylation of specific methylglutamate residues introduced into the chemoreceptors (methyl-accepting chemotaxis proteins or MCP) by CheR. Also mediates the irreversible deamidation of specific glutamine residues to glutamic acid. The sequence is that of Protein-glutamate methylesterase/protein-glutamine glutaminase of group 2 operon from Rhodopseudomonas palustris (strain ATCC BAA-98 / CGA009).